The primary structure comprises 410 residues: Tryptophan synthase beta chain (410 aa).

K99 bears the N6-(pyridoxal phosphate)lysine mark.

Belongs to the TrpB family. In terms of assembly, tetramer of two alpha and two beta chains. Requires pyridoxal 5'-phosphate as cofactor.

It catalyses the reaction (1S,2R)-1-C-(indol-3-yl)glycerol 3-phosphate + L-serine = D-glyceraldehyde 3-phosphate + L-tryptophan + H2O. The protein operates within amino-acid biosynthesis; L-tryptophan biosynthesis; L-tryptophan from chorismate: step 5/5. In terms of biological role, the beta subunit is responsible for the synthesis of L-tryptophan from indole and L-serine. The polypeptide is Tryptophan synthase beta chain (Pseudomonas fluorescens (strain Pf0-1)).